The chain runs to 102 residues: Ferredoxin-thioredoxin reductase, catalytic chain (102 aa).

Cys-53 contributes to the [4Fe-4S] cluster binding site. Cys-55 serves as the catalytic Nucleophile. A disulfide bridge connects residues Cys-55 and Cys-85. Residues Cys-72, Cys-74, and Cys-83 each contribute to the [4Fe-4S] cluster site.

It belongs to the ferredoxin thioredoxin reductase beta subunit family. Heterodimer of subunit A (variable subunit) and subunit B (catalytic subunit). Heterodimeric FTR forms a complex with ferredoxin and thioredoxin. The cofactor is [4Fe-4S] cluster.

Its subcellular location is the plastid. It is found in the chloroplast. The enzyme catalyses [thioredoxin]-disulfide + 2 reduced [2Fe-2S]-[ferredoxin] + 2 H(+) = [thioredoxin]-dithiol + 2 oxidized [2Fe-2S]-[ferredoxin]. In terms of biological role, catalytic subunit of the ferredoxin-thioredoxin reductase (FTR), which catalyzes the two-electron reduction of thioredoxins by the electrons provided by reduced ferredoxin. The sequence is that of Ferredoxin-thioredoxin reductase, catalytic chain (ftrB) from Guillardia theta (Cryptophyte).